Here is a 167-residue protein sequence, read N- to C-terminus: Cell division protein SepF (167 aa).

The interval 25 to 64 (EEDVAPVNNSTFQEKKHKKRSAVQRKQKNSDQEGDSVVPL) is disordered. Positions 39-51 (KKHKKRSAVQRKQ) are enriched in basic residues.

The protein belongs to the SepF family. As to quaternary structure, homodimer. Interacts with FtsZ.

Its subcellular location is the cytoplasm. Cell division protein that is part of the divisome complex and is recruited early to the Z-ring. Probably stimulates Z-ring formation, perhaps through the cross-linking of FtsZ protofilaments. Its function overlaps with FtsA. This chain is Cell division protein SepF, found in Natranaerobius thermophilus (strain ATCC BAA-1301 / DSM 18059 / JW/NM-WN-LF).